Reading from the N-terminus, the 85-residue chain is Putative defensin-like protein 258 (85 aa).

An N-terminal signal peptide occupies residues 1-25; it reads MINVSLKRSLLIFISVITSNIGSEA. 3 disulfides stabilise this stretch: Cys-57-Cys-75, Cys-63-Cys-82, and Cys-67-Cys-84.

This sequence belongs to the DEFL family.

It is found in the secreted. The protein is Putative defensin-like protein 258 of Arabidopsis thaliana (Mouse-ear cress).